The sequence spans 268 residues: Thiazole synthase (268 aa).

The active-site Schiff-base intermediate with DXP is K108. 1-deoxy-D-xylulose 5-phosphate-binding positions include G169, 195–196 (AG), and 217–218 (NS). Residues 248-268 (RLKENPLASPSSPLEGVISNN) form a disordered region. Positions 255–268 (ASPSSPLEGVISNN) are enriched in polar residues.

The protein belongs to the ThiG family. As to quaternary structure, homotetramer. Forms heterodimers with either ThiH or ThiS.

The protein localises to the cytoplasm. The catalysed reaction is [ThiS sulfur-carrier protein]-C-terminal-Gly-aminoethanethioate + 2-iminoacetate + 1-deoxy-D-xylulose 5-phosphate = [ThiS sulfur-carrier protein]-C-terminal Gly-Gly + 2-[(2R,5Z)-2-carboxy-4-methylthiazol-5(2H)-ylidene]ethyl phosphate + 2 H2O + H(+). It functions in the pathway cofactor biosynthesis; thiamine diphosphate biosynthesis. Functionally, catalyzes the rearrangement of 1-deoxy-D-xylulose 5-phosphate (DXP) to produce the thiazole phosphate moiety of thiamine. Sulfur is provided by the thiocarboxylate moiety of the carrier protein ThiS. In vitro, sulfur can be provided by H(2)S. The sequence is that of Thiazole synthase from Prochlorococcus marinus (strain NATL1A).